The sequence spans 236 residues: Phosphoribosylaminoimidazole-succinocarboxamide synthase (236 aa).

This sequence belongs to the SAICAR synthetase family.

The catalysed reaction is 5-amino-1-(5-phospho-D-ribosyl)imidazole-4-carboxylate + L-aspartate + ATP = (2S)-2-[5-amino-1-(5-phospho-beta-D-ribosyl)imidazole-4-carboxamido]succinate + ADP + phosphate + 2 H(+). The protein operates within purine metabolism; IMP biosynthesis via de novo pathway; 5-amino-1-(5-phospho-D-ribosyl)imidazole-4-carboxamide from 5-amino-1-(5-phospho-D-ribosyl)imidazole-4-carboxylate: step 1/2. This chain is Phosphoribosylaminoimidazole-succinocarboxamide synthase, found in Chlorobium limicola (strain DSM 245 / NBRC 103803 / 6330).